We begin with the raw amino-acid sequence, 714 residues long: Fatty acid oxidation complex subunit alpha (714 aa).

An enoyl-CoA hydratase region spans residues 1 to 190 (MEMASAFTLN…KLGLVDDVVP (190 aa)). Positions 306–714 (APLNSVGILG…FWKTTATDLQ (409 aa)) are 3-hydroxyacyl-CoA dehydrogenase.

This sequence in the N-terminal section; belongs to the enoyl-CoA hydratase/isomerase family. It in the central section; belongs to the 3-hydroxyacyl-CoA dehydrogenase family. Heterotetramer of two alpha chains (FadJ) and two beta chains (FadI).

It localises to the cytoplasm. It carries out the reaction a (3S)-3-hydroxyacyl-CoA = a (2E)-enoyl-CoA + H2O. The enzyme catalyses a 4-saturated-(3S)-3-hydroxyacyl-CoA = a (3E)-enoyl-CoA + H2O. It catalyses the reaction a (3S)-3-hydroxyacyl-CoA + NAD(+) = a 3-oxoacyl-CoA + NADH + H(+). The catalysed reaction is (3S)-3-hydroxybutanoyl-CoA = (3R)-3-hydroxybutanoyl-CoA. The protein operates within lipid metabolism; fatty acid beta-oxidation. In terms of biological role, catalyzes the formation of a hydroxyacyl-CoA by addition of water on enoyl-CoA. Also exhibits 3-hydroxyacyl-CoA epimerase and 3-hydroxyacyl-CoA dehydrogenase activities. The sequence is that of Fatty acid oxidation complex subunit alpha from Escherichia coli (strain UTI89 / UPEC).